The primary structure comprises 248 residues: Probable phosphatase Sfri_3709 (248 aa).

Histidine 8, histidine 10, histidine 16, histidine 41, glutamate 74, histidine 102, histidine 132, aspartate 193, and histidine 195 together coordinate Zn(2+).

It belongs to the PHP family. The cofactor is Zn(2+).

This chain is Probable phosphatase Sfri_3709, found in Shewanella frigidimarina (strain NCIMB 400).